The primary structure comprises 479 residues: Aldehyde dehydrogenase family 3 member B3 (479 aa).

Active-site residues include glutamate 223 and cysteine 257. Cysteine 476 carries S-geranylgeranyl cysteine lipidation. Residues 477–479 (TLL) constitute a propeptide, removed in mature form.

This sequence belongs to the aldehyde dehydrogenase family. Geranylgeranylation is important for membrane localization and enzyme activity. In terms of tissue distribution, expressed in testis, kidney, small intestine, spleen, white adipose tissue, liver and lung.

The protein localises to the cell membrane. The enzyme catalyses an aldehyde + NAD(+) + H2O = a carboxylate + NADH + 2 H(+). It catalyses the reaction hexadecanoate + NADH + 2 H(+) = hexadecanal + NAD(+) + H2O. The catalysed reaction is octanal + NAD(+) + H2O = octanoate + NADH + 2 H(+). Its function is as follows. Oxidizes medium and long chain aldehydes into non-toxic fatty acids. The polypeptide is Aldehyde dehydrogenase family 3 member B3 (Mus musculus (Mouse)).